Reading from the N-terminus, the 574-residue chain is Penicillin-binding protein activator LpoA (574 aa).

An N-terminal signal peptide occupies residues 1–25 (MTILLQRAKFKKRLMPILFPLMLAG). The N-palmitoyl cysteine moiety is linked to residue Cys-26. Cys-26 is lipidated: S-diacylglycerol cysteine.

Belongs to the LpoA family. Interacts with PBP1a.

It is found in the cell outer membrane. In terms of biological role, regulator of peptidoglycan synthesis that is essential for the function of penicillin-binding protein 1A (PBP1a). This is Penicillin-binding protein activator LpoA from Mannheimia succiniciproducens (strain KCTC 0769BP / MBEL55E).